Reading from the N-terminus, the 78-residue chain is Defensin-like protein 141 (78 aa).

Positions 1-24 are cleaved as a signal peptide; that stretch reads MTKSIISAFFIILILGMMVNEIEG. 4 disulfide bridges follow: Cys31/Cys76, Cys40/Cys59, Cys45/Cys70, and Cys49/Cys72.

The protein belongs to the DEFL family.

It is found in the secreted. This is Defensin-like protein 141 (LCR3) from Arabidopsis thaliana (Mouse-ear cress).